Consider the following 789-residue polypeptide: MYLSRPTGVARFAASSSSSSSASLFPGVDVDTTTKTGALHFEETKERIKKLFDKVELSVSAYDTAWVAMVPSPNSLNQPLFPECINWVLDSQHADGSWGLLHNDQLLMKANLLSTLACVLTLKRWNIGHDHMSKALDFIKSNIASATDENQRSPVGFDIIFPGMIEYAKDLNLNLPLAPTNVDALVRKKELELRSCRSNSEGGKAYLAYVSEGIGKLQDWDMVMQYQRKNGSLFNSPSTTAAAFMHRNDDGCFDYLRSLLQKFDGSVPTIYPLDIYARLHMVDSLQKFGIARHFKEEIRSVLDETYRCWMQGEENIFLDASTCAMAFRMLRVEGYDVSSDQLTQFSEDIFPNCLGGYLKDFGASLELYKASQIITHPDESVLENINSWTSRFLKHGLSSDSVWSDRTDSVVKQEAVNALEFPYNATLERLISKRAMESYSGDIVRISKSPYACLNFGHQDFLELAVEDFNTLQRIHLKELEELQRWVVENKLDELKFFRLHLGYCYFAAAATLTDPELHDARIAWAQNGVLTTVVDDFYDGGGSEEELDNLIELVEKWDPDGEVGYCSKDVEIVFLALHSTVCEIGRRALVWQGRSVMRNVIDGWLALLKVMRKEAEWSTNKVVPSMGEYMEQAHVSFALGPIILPMLFFVGPKLSEEMIGSCEYQKLYKLMSTAGRLKNDIRSYDRECKEGKLNILSLWMIDGGGNVTKEEAIEAIKGDFERAIRELLGLVLQENTTIPRACKDLFWKLMSIVNLFYMEDDGYTSNRLMNTVKAMFEQPMDLDALLNK.

Mg(2+) is bound by residues aspartate 536, aspartate 540, asparagine 680, serine 684, and glutamate 688. Residues aspartate 536–aspartate 540 carry the DDXXD motif motif.

This sequence belongs to the terpene synthase family. Requires Mg(2+) as cofactor. Post-translationally, the N-terminus is blocked. Abundant in most tissues. Present in low amounts in mature cotyledons.

It is found in the plastid. Its subcellular location is the chloroplast. It carries out the reaction ent-copalyl diphosphate = ent-kaur-16-ene + diphosphate. It participates in plant hormone biosynthesis; gibberellin biosynthesis. Functionally, catalyzes the conversion of ent-copalyl diphosphate to the gibberellin precursor ent-kaur-16-ene. In Cucurbita maxima (Pumpkin), this protein is Ent-kaur-16-ene synthase, chloroplastic.